A 573-amino-acid polypeptide reads, in one-letter code: Ribosomal RNA-processing protein 9 (573 aa).

The disordered stretch occupies residues 1-63; that stretch reads MSDVTQQKKR…FEGENPADKR (63 aa). At Ser-2 the chain carries N-acetylserine. Acidic residues predominate over residues 25–58; the sequence is DEEITDPSSNEDEQLEVSDEEDALESEEEFEGEN. Residues 32–106 adopt a coiled-coil conformation; the sequence is SSNEDEQLEV…KERTIDEYNN (75 aa). Ser-50 is subject to Phosphoserine. 6 WD repeats span residues 234–273, 278–317, 320–359, 397–435, 471–509, and 516–562; these read GHYD…PVKV, DRRG…QLEI, GHHD…RLTF, FCEG…PIFT, QPFW…RSFE, and GAKG…ARNG.

This sequence belongs to the WD repeat RRP9 family. As to quaternary structure, interacts with UTP25. Component of the ribosomal small subunit (SSU) processome composed of at least 40 protein subunits and snoRNA U3.

Its subcellular location is the nucleus. It is found in the nucleolus. Its function is as follows. Involved in nucleolar processing of pre-18S ribosomal RNA. Required for efficient pre-rRNA cleavage at sites A0, A1 and A2, and biosynthesis of 18S rRNA. In Saccharomyces cerevisiae (strain ATCC 204508 / S288c) (Baker's yeast), this protein is Ribosomal RNA-processing protein 9 (RRP9).